The sequence spans 1495 residues: Collagen alpha-1(XVII) chain (1495 aa).

Residues 1–17 show a composition bias toward basic and acidic residues; the sequence is MDSVTKKTRQDGSEVTE. A disordered region spans residues 1–138; it reads MDSVTKKTRQ…VRLQSASPSG (138 aa). The Cytoplasmic portion of the chain corresponds to 1–435; sequence MDSVTKKTRQ…CGSCCSWWKW (435 aa). Residues 1–535 are nonhelical region (NC16); it reads MDSVTKKTRQ…IERGYFRGER (535 aa). The span at 19–32 shows a compositional bias: polar residues; sequence QGGSSSGLKTSSHT. Residues 51-63 show a composition bias toward low complexity; the sequence is SSGSGRLNSSSSG. 2 stretches are compositionally biased toward polar residues: residues 64–80 and 95–104; these read YRQT…SPGS and EGSSSANSSP. A helical; Signal-anchor for type II membrane protein membrane pass occupies residues 436 to 456; that stretch reads LLGLLLAWLLLLGLLFGLIAL. The Extracellular portion of the chain corresponds to 457–1495; sequence AEEVRKLKSR…GRRRRRSVGV (1039 aa). 7 disordered regions span residues 532–824, 847–999, 1160–1185, 1201–1226, 1251–1278, 1295–1336, and 1396–1416; these read RGER…EKGS, DLQG…SSSQ, EFSG…SSGI, SISG…TGLL, RSYI…LVAG, GGSI…GSYG, and MSYT…PGIS. Positions 536 to 1482 are triple-helical region; it reads GEPGMKGDMG…KGEKGEKGEQ (947 aa). Low complexity-rich tracts occupy residues 702 to 711 and 761 to 773; these read PGAKGPAGQA and RPGA…APGK. Pro residues predominate over residues 786-807; sequence PGPPGPPGPIGPTGPPGVPGPV. The span at 809-818 shows a compositional bias: low complexity; it reads PAGLPGQQGP. Pro residues-rich tracts occupy residues 871–886, 901–910, 946–955, 981–993, 1167–1179, 1208–1218, and 1257–1269; these read PRGP…PPGR, PPGPPGPPGP, PPGP…PPGP, PPGP…PPGI, and PPGPPGPPGPP. Residues 1296–1308 are compositionally biased toward gly residues; that stretch reads GSIGAEGSHGGSL. The span at 1309 to 1336 shows a compositional bias: low complexity; it reads GASSSYGSSMSSSMSSYSASMGSDGSYG. Pro residues predominate over residues 1403-1413; the sequence is PPGPPGPPGPP. N-linked (GlcNAc...) asparagine glycosylation is present at N1424. Residues 1435–1495 are disordered; sequence THGTVRGPPG…GRRRRRSVGV (61 aa). Over residues 1472–1481 the composition is skewed to basic and acidic residues; sequence PKGEKGEKGE. Residues 1483-1495 are nonhelical region (NC1); it reads MYSGRRRRRSVGV. Basic residues predominate over residues 1486-1495; sequence GRRRRRSVGV.

In terms of assembly, homotrimers of alpha 1(XVII)chains. The intracellular/endo domain is disulfide-linked. In terms of processing, prolines at the third position of the tripeptide repeating unit (G-X-Y) are hydroxylated in some or all of the chains. Post-translationally, the ectodomain is shedded from the surface of keratinocytes resulting in a 120-kDa soluble form, also named as 120 kDa linear IgA disease antigen homolog. The shedding is mediated by membrane-bound metalloproteases. As to expression, cornea specific.

The protein resides in the cell junction. Its subcellular location is the hemidesmosome. The protein localises to the membrane. It is found in the secreted. It localises to the extracellular space. The protein resides in the extracellular matrix. Its subcellular location is the basement membrane. Its function is as follows. May play a role in the integrity of hemidesmosome and the attachment of basal keratinocytes to the underlying basement membrane. Functionally, the 120 kDa linear IgA disease antigen homolog is an anchoring filament component involved in dermal-epidermal cohesion. The sequence is that of Collagen alpha-1(XVII) chain (COL17A1) from Gallus gallus (Chicken).